The primary structure comprises 459 residues: Zinc finger protein ZFP2 (459 aa).

C2H2-type zinc fingers lie at residues 100-122 (YGCDECGKTFRQSSSLLKHQRIH), 128-150 (YTCNVCDKHFIERSSLTVHQRTH), 156-178 (YKCHECGKAFSQSMNLTVHQRTH), 184-206 (YQCKECGKAFRKNSSLIQHERIH), 212-234 (YKCHDCGKAFTQSMNLTVHQRTH), 240-262 (YECNQCGKAFSQSMHLIVHQRSH), 268-290 (YECSECGKAFSKSSTLTLHQRNH), 296-318 (YKCNKCGKSFSQSTYLIEHQRLH), 324-346 (FECNQCGKAFSKNSSLTQHRRIH), 352-374 (YECMICGKHFTGRSSLTVHQVIH), 380-402 (YECTECGKAFSQSAYLIEHQRIH), 408-430 (YECDQCGKAFIKNSSLIVHQRIH), and 436-458 (YQCNECGKSFSRSTNLTRHQRTH).

Belongs to the krueppel C2H2-type zinc-finger protein family.

The protein localises to the nucleus. Its function is as follows. Probable transcription factor involved in neuronal differentiation and/or phenotypic maintenance. This is Zinc finger protein ZFP2 (Zfp2) from Mus musculus (Mouse).